The primary structure comprises 429 residues: Arginine biosynthesis bifunctional protein ArgJ (429 aa).

T181, K207, T218, E302, N424, and S429 together coordinate substrate. Residue T218 is the Nucleophile of the active site.

The protein belongs to the ArgJ family. In terms of assembly, heterotetramer of two alpha and two beta chains.

It is found in the cytoplasm. The enzyme catalyses N(2)-acetyl-L-ornithine + L-glutamate = N-acetyl-L-glutamate + L-ornithine. It carries out the reaction L-glutamate + acetyl-CoA = N-acetyl-L-glutamate + CoA + H(+). It functions in the pathway amino-acid biosynthesis; L-arginine biosynthesis; L-ornithine and N-acetyl-L-glutamate from L-glutamate and N(2)-acetyl-L-ornithine (cyclic): step 1/1. It participates in amino-acid biosynthesis; L-arginine biosynthesis; N(2)-acetyl-L-ornithine from L-glutamate: step 1/4. Catalyzes two activities which are involved in the cyclic version of arginine biosynthesis: the synthesis of N-acetylglutamate from glutamate and acetyl-CoA as the acetyl donor, and of ornithine by transacetylation between N(2)-acetylornithine and glutamate. The polypeptide is Arginine biosynthesis bifunctional protein ArgJ (Chlorobium chlorochromatii (strain CaD3)).